Reading from the N-terminus, the 520-residue chain is BBSome complex member BBS4 (520 aa).

The tract at residues 1 to 26 (MAEVKLGMKTQVPASVESQKPRSKKA) is disordered. The segment at 1 to 66 (MAEVKLGMKT…EQLQETQGLC (66 aa)) is required for localization to centrosomes. TPR repeat units lie at residues 67–100 (EYAIYVQALIFRLEGNIQESLELFQTCAVLSPQC), 102–134 (DNLKQVARSLFLLGKHKAATEVYNEAAKLNQKD), 135–167 (WEICHNLGVCYTYLKQFNKAQDQLHSALQLNKH), 168–201 (DLTYIMLGKIHLLQGDLDKAIEIYKKAVEFSPEN), 203–235 (ELLTTLGLLYLQLGVYQKAFEHLGNALTYDPAN), 237–269 (KAILAAGSMMQTHGDFDVALTKYRVVACAIPES), 270–303 (PPLWNNIGMCFFGKKKYVAAISCLKRANYLAPFD), 304–337 (WKILYNLGLVHLTMQQYASAFHFLSAAINFQPKM), 339–371 (ELYMLLAVALTNLEDIENARRAYVEAVRLDKCN), and 373–408 (LVNLNYAVLLYNQGEKKSALAQYQEMEKKVNFLKDN). The tract at residues 101 to 337 (ADNLKQVARS…SAAINFQPKM (237 aa)) is interaction with PCM1. The required for localization to centrosomes stretch occupies residues 338 to 520 (GELYMLLAVA…TEASEQKKEK (183 aa)). Residues 488–520 (AQLPKPPSLPLEPEPEPTVEASPTEASEQKKEK) form a disordered region.

It belongs to the BBS4 family. Part of BBSome complex, that contains BBS1, BBS2, BBS4, BBS5, BBS7, BBS8/TTC8, BBS9 and BBIP10. Interacts with PCM1 and DCTN1. Interacts with DC28B. Interacts with ALDOB and C2CD3. Interacts with PKD1. Interacts with CEP290. Interacts with DLEC1. As to expression, expressed in the hippocampus and dentate gyrus, the columnar epithelial cells of bronchioles, the olfactory epithelium and the inner segment and outer nuclear layer of the retina. Expressed in testis.

Its subcellular location is the cytoplasm. It localises to the cytoskeleton. The protein resides in the microtubule organizing center. The protein localises to the centrosome. It is found in the cell projection. Its subcellular location is the cilium membrane. It localises to the centriolar satellite. The protein resides in the cilium. The protein localises to the flagellum. The BBSome complex is thought to function as a coat complex required for sorting of specific membrane proteins to the primary cilia. The BBSome complex is required for ciliogenesis but is dispensable for centriolar satellite function. This ciliogenic function is mediated in part by the Rab8 GDP/GTP exchange factor, which localizes to the basal body and contacts the BBSome. Rab8(GTP) enters the primary cilium and promotes extension of the ciliary membrane. Firstly the BBSome associates with the ciliary membrane and binds to RAB3IP/Rabin8, the guanosyl exchange factor (GEF) for Rab8 and then the Rab8-GTP localizes to the cilium and promotes docking and fusion of carrier vesicles to the base of the ciliary membrane. The BBSome complex, together with the LTZL1, controls SMO ciliary trafficking and contributes to the sonic hedgehog (SHH) pathway regulation. Required for proper BBSome complex assembly and its ciliary localization. Required for microtubule anchoring at the centrosome but not for microtubule nucleation. May be required for the dynein-mediated transport of pericentriolar proteins to the centrosome. This is BBSome complex member BBS4 (Bbs4) from Mus musculus (Mouse).